Reading from the N-terminus, the 259-residue chain is Thiazole synthase (259 aa).

Lys-95 acts as the Schiff-base intermediate with DXP in catalysis. 1-deoxy-D-xylulose 5-phosphate-binding positions include Gly-156, 182 to 183 (AG), and 204 to 205 (NT).

This sequence belongs to the ThiG family. In terms of assembly, homotetramer. Forms heterodimers with either ThiH or ThiS.

Its subcellular location is the cytoplasm. The catalysed reaction is [ThiS sulfur-carrier protein]-C-terminal-Gly-aminoethanethioate + 2-iminoacetate + 1-deoxy-D-xylulose 5-phosphate = [ThiS sulfur-carrier protein]-C-terminal Gly-Gly + 2-[(2R,5Z)-2-carboxy-4-methylthiazol-5(2H)-ylidene]ethyl phosphate + 2 H2O + H(+). It functions in the pathway cofactor biosynthesis; thiamine diphosphate biosynthesis. In terms of biological role, catalyzes the rearrangement of 1-deoxy-D-xylulose 5-phosphate (DXP) to produce the thiazole phosphate moiety of thiamine. Sulfur is provided by the thiocarboxylate moiety of the carrier protein ThiS. In vitro, sulfur can be provided by H(2)S. This Baumannia cicadellinicola subsp. Homalodisca coagulata protein is Thiazole synthase.